A 1451-amino-acid chain; its full sequence is Fanconi anemia group D2 protein homolog (1451 aa).

The interval 1–291 (MVSKRSRLDF…VKFILHSVTD (291 aa)) is interaction with FANCE. A Phosphoserine modification is found at Ser222. Positions 248-359 (VFSSLRLDPN…IKSAIRYEKT (112 aa)) are interaction with BRCA2. Lys561 participates in a covalent cross-link: Glycyl lysine isopeptide (Lys-Gly) (interchain with G-Cter in ubiquitin). Ser716 carries the phosphoserine modification. Positions 858 to 879 (AAKSRHKGKTGGKKQKADSSTA) are disordered. The span at 860–871 (KSRHKGKTGGKK) shows a compositional bias: basic residues. Phosphoserine is present on residues Ser1257, Ser1406, and Ser1414. The disordered stretch occupies residues 1399-1451 (IISQHPSSPENTSEDSEDGMTSYVSRNRAIEDGEDEANDGQDRDSDESDDSSS). The span at 1430 to 1451 (DGEDEANDGQDRDSDESDDSSS) shows a compositional bias: acidic residues.

Belongs to the Fanconi anemia protein FANCD2 family. In terms of assembly, homodimer; cannot be ubiquitinated and does not bind DNA. Part of a FANCI-FANCD2 heterodimeric complex that binds and scans dsDNA for DNA damage. Interacts directly with FANCE and FANCI. Interacts with USP1 and MEN1. The ubiquitinated form specifically interacts with BRCA1 and BLM. Both the nonubiquitinated and the monoubiquitinated forms interact with BRCA2; this interaction is mediated by phosphorylated FANCG and the complex also includes XCCR3. The ubiquitinated form specifically interacts with MTMR15/FAN1 (via UBZ-type zinc finger), leading to recruit MTMR15/FAN1 to sites of DNA damage. Interacts with DCLRE1B/Apollo. Interacts with POLN. Interacts with UHRF1 and UHRF2; these interactions promote FANCD2 activation. Post-translationally, monoubiquitinated on Lys-561 during S phase and upon genotoxic stress by FANCL in complex with E2 ligases UBE2T or UBE2W. Deubiquitinated by USP1 as cells enter G2/M, or once DNA repair is completed. Monoubiquitination requires the joint intervention of the FANC core complex, including FANCA, FANCB, FANCC, FANCE, FANCF, FANCG, and FANCM, and proteins involved in cell cycle checkpoints and DNA repair, including RPA1, ATR, CHEK1 and BRCA1, and is mediated by FANCL/PHF9. Monoubiquitination prevents DNA release from the FANCI-FANCD2 complex. FANCD2 is only ubiquitinated in the FANCI-FANCD2 complex and the monoubiquitination of FANCD2 is promoted by phosphorylation of FANCI. Ubiquitination is required for binding to chromatin, interaction with BRCA1, BRCA2 and MTMR15/FAN1, DNA repair, and normal cell cycle progression. Phosphorylated on several sites including Ser-222 and Ser-1401 in response to genotoxic stress by ATM and/or ATR.

Its subcellular location is the nucleus. Required for maintenance of chromosomal stability. Promotes accurate and efficient pairing of homologs during meiosis. Involved in the repair of DNA double-strand breaks, both by homologous recombination and single-strand annealing. The FANCI-FANCD2 complex binds and scans double-stranded DNA (dsDNA) for DNA damage; this complex stalls at DNA junctions between double-stranded DNA and single-stranded DNA. May participate in S phase and G2 phase checkpoint activation upon DNA damage. Plays a role in preventing breakage and loss of missegregating chromatin at the end of cell division, particularly after replication stress. Promotes BRCA2/FANCD1 loading onto damaged chromatin. May also be involved in B-cell immunoglobulin isotype switching. This chain is Fanconi anemia group D2 protein homolog (Fancd2), found in Rattus norvegicus (Rat).